A 331-amino-acid chain; its full sequence is Biotin synthase (331 aa).

Residues 39–264 (SELQTCYLVS…VFPQSMVRLA (226 aa)) enclose the Radical SAM core domain. [4Fe-4S] cluster contacts are provided by Cys-54, Cys-58, and Cys-61. Positions 98, 130, 190, and 262 each coordinate [2Fe-2S] cluster.

Belongs to the radical SAM superfamily. Biotin synthase family. Homodimer. Requires [4Fe-4S] cluster as cofactor. It depends on [2Fe-2S] cluster as a cofactor.

The enzyme catalyses (4R,5S)-dethiobiotin + (sulfur carrier)-SH + 2 reduced [2Fe-2S]-[ferredoxin] + 2 S-adenosyl-L-methionine = (sulfur carrier)-H + biotin + 2 5'-deoxyadenosine + 2 L-methionine + 2 oxidized [2Fe-2S]-[ferredoxin]. The protein operates within cofactor biosynthesis; biotin biosynthesis; biotin from 7,8-diaminononanoate: step 2/2. Catalyzes the conversion of dethiobiotin (DTB) to biotin by the insertion of a sulfur atom into dethiobiotin via a radical-based mechanism. This is Biotin synthase from Chlamydia abortus (strain DSM 27085 / S26/3) (Chlamydophila abortus).